Reading from the N-terminus, the 393-residue chain is Acetate kinase (393 aa).

Asparagine 7 contributes to the Mg(2+) binding site. Residue lysine 14 coordinates ATP. Residue arginine 89 coordinates substrate. The active-site Proton donor/acceptor is the aspartate 146. ATP is bound by residues 204–208 (HIGNG), 279–281 (DSR), and 327–331 (GIGEN). Glutamate 379 contacts Mg(2+).

Belongs to the acetokinase family. In terms of assembly, homodimer. Requires Mg(2+) as cofactor. Mn(2+) is required as a cofactor.

It localises to the cytoplasm. The catalysed reaction is acetate + ATP = acetyl phosphate + ADP. It participates in metabolic intermediate biosynthesis; acetyl-CoA biosynthesis; acetyl-CoA from acetate: step 1/2. In terms of biological role, catalyzes the formation of acetyl phosphate from acetate and ATP. Can also catalyze the reverse reaction. In Acholeplasma laidlawii (strain PG-8A), this protein is Acetate kinase.